Reading from the N-terminus, the 199-residue chain is NAD(P)H dehydrogenase (quinone) (199 aa).

A Flavodoxin-like domain is found at 4-190; that stretch reads MLVLYYSAYG…DGARFQGRRV (187 aa). FMN-binding positions include 10 to 15 and 78 to 80; these read SAYGHM and TRY. Position 12 (Tyr-12) interacts with NAD(+). Trp-98 contributes to the substrate binding site. Residues 113–119 and His-134 contribute to the FMN site; that span reads STATQYG. The interval 161–181 is disordered; that stretch reads YGMTTTADGDGSRQPSAQELD. A compositionally biased stretch (polar residues) spans 163-177; that stretch reads MTTTADGDGSRQPSA.

Belongs to the WrbA family. FMN serves as cofactor.

The catalysed reaction is a quinone + NADH + H(+) = a quinol + NAD(+). It catalyses the reaction a quinone + NADPH + H(+) = a quinol + NADP(+). The protein is NAD(P)H dehydrogenase (quinone) of Brucella canis (strain ATCC 23365 / NCTC 10854 / RM-666).